We begin with the raw amino-acid sequence, 398 residues long: DNA-directed RNA polymerase III subunit RPC4 (398 aa).

Positions 1 to 114 (MSEGNAAGEP…SHSIFEQGPA (114 aa)) are disordered. Ser-2 is modified (N-acetylserine). Residue Ser-42 is modified to Phosphoserine. Residues 66–100 (KIKEEPKEEVTVKKEKRERDRDRQREGHGRGRGRP) are compositionally biased toward basic and acidic residues. Residues Lys-68 and Lys-78 each participate in a glycyl lysine isopeptide (Lys-Gly) (interchain with G-Cter in SUMO2) cross-link. Omega-N-methylarginine occurs at positions 95, 97, and 99. Glycyl lysine isopeptide (Lys-Gly) (interchain with G-Cter in SUMO2) cross-links involve residues Lys-141, Lys-152, Lys-160, Lys-190, Lys-199, Lys-206, Lys-220, Lys-285, Lys-302, Lys-310, and Lys-396. The disordered stretch occupies residues 220–244 (KEEPRDEEEEAKMKAPPKAARKTPG).

The protein belongs to the eukaryotic RPC4/POLR3D RNA polymerase subunit family. Component of the RNA polymerase III complex consisting of 17 subunits: a ten-subunit horseshoe-shaped catalytic core composed of POLR3A/RPC1, POLR3B/RPC2, POLR1C/RPAC1, POLR1D/RPAC2, POLR3K/RPC10, POLR2E/RPABC1, POLR2F/RPABC2, POLR2H/RPABC3, POLR2K/RPABC4 and POLR2L/RPABC5; a mobile stalk composed of two subunits POLR3H/RPC8 and CRCP/RPC9, protruding from the core and functioning primarily in transcription initiation; and additional subunits homologous to general transcription factors of the RNA polymerase II machinery, POLR3C/RPC3-POLR3F/RPC6-POLR3G/RPC7 heterotrimer required for transcription initiation and POLR3D/RPC4-POLR3E/RPC5 heterodimer involved in both transcription initiation and termination. In terms of processing, sumoylation on Lys-141 can serve as a signal to mark misfolded Pol III for proteasomal degradation.

Its subcellular location is the nucleus. Its function is as follows. DNA-dependent RNA polymerase catalyzes the transcription of DNA into RNA using the four ribonucleoside triphosphates as substrates. Specific peripheric component of RNA polymerase III (Pol III) which synthesizes small non-coding RNAs including 5S rRNA, snRNAs, tRNAs and miRNAs from at least 500 distinct genomic loci. Assembles with POLR3E/RPC5 forming a subcomplex that binds the Pol III core. Enables recruitment of Pol III at transcription initiation site and drives transcription initiation from both type 2 and type 3 DNA promoters. Required for efficient transcription termination and reinitiation. Pol III plays a key role in sensing and limiting infection by intracellular bacteria and DNA viruses. Acts as nuclear and cytosolic DNA sensor involved in innate immune response. Can sense non-self dsDNA that serves as template for transcription into dsRNA. The non-self RNA polymerase III transcripts, such as Epstein-Barr virus-encoded RNAs (EBERs) induce type I interferon and NF-kappa-B through the RIG-I pathway. The protein is DNA-directed RNA polymerase III subunit RPC4 of Homo sapiens (Human).